Here is a 501-residue protein sequence, read N- to C-terminus: Aldehyde dehydrogenase 1A1 (501 aa).

Position 2 is an N-acetylserine (Ser-2). Lys-91 and Lys-128 each carry N6-acetyllysine. NAD(+) contacts are provided by residues 167-170 (IPWN), 193-196 (KPAE), 226-227 (GP), and 246-247 (GS). The residue at position 252 (Lys-252) is an N6-acetyllysine. Residue Glu-269 is the Proton acceptor of the active site. 269–271 (ELG) provides a ligand contact to NAD(+). Catalysis depends on Cys-303, which acts as the Nucleophile. Positions 336 to 501 (LTPGVTQGPQ…VTVKISQKNS (166 aa)) are mediates interaction with PRMT3. Thr-337 carries the phosphothreonine modification. 349–353 (EQYDK) lines the NAD(+) pocket. Lys-353 and Lys-367 each carry N6-acetyllysine. 400–402 (EIF) is a binding site for NAD(+). Position 410 is an N6-acetyllysine (Lys-410). At Ser-413 the chain carries Phosphoserine. N6-acetyllysine occurs at positions 419, 435, and 495.

It belongs to the aldehyde dehydrogenase family. In terms of assembly, homotetramer. Interacts with PRMT3; the interaction is direct, inhibits ALDH1A1 aldehyde dehydrogenase activity and is independent of the methyltransferase activity of PRMT3. Post-translationally, the N-terminus is blocked most probably by acetylation. In terms of tissue distribution, expressed by erythrocytes (at protein level).

It localises to the cytoplasm. The protein resides in the cytosol. Its subcellular location is the cell projection. The protein localises to the axon. The enzyme catalyses an aldehyde + NAD(+) + H2O = a carboxylate + NADH + 2 H(+). The catalysed reaction is all-trans-retinal + NAD(+) + H2O = all-trans-retinoate + NADH + 2 H(+). It catalyses the reaction 9-cis-retinal + NAD(+) + H2O = 9-cis-retinoate + NADH + 2 H(+). It carries out the reaction 11-cis-retinal + NAD(+) + H2O = 11-cis-retinoate + NADH + 2 H(+). The enzyme catalyses 13-cis-retinal + NAD(+) + H2O = 13-cis-retinoate + NADH + 2 H(+). The catalysed reaction is 3-deoxyglucosone + NAD(+) + H2O = 2-dehydro-3-deoxy-D-gluconate + NADH + 2 H(+). It catalyses the reaction (E)-4-hydroxynon-2-enal + NAD(+) + H2O = (E)-4-hydroxynon-2-enoate + NADH + 2 H(+). It carries out the reaction malonaldehyde + NAD(+) + H2O = 3-oxopropanoate + NADH + 2 H(+). The enzyme catalyses hexanal + NAD(+) + H2O = hexanoate + NADH + 2 H(+). The catalysed reaction is propanal + NAD(+) + H2O = propanoate + NADH + 2 H(+). It catalyses the reaction acetaldehyde + NAD(+) + H2O = acetate + NADH + 2 H(+). It carries out the reaction benzaldehyde + NAD(+) + H2O = benzoate + NADH + 2 H(+). The enzyme catalyses 4-aminobutanal + NAD(+) + H2O = 4-aminobutanoate + NADH + 2 H(+). It functions in the pathway cofactor metabolism; retinol metabolism. Its activity is regulated as follows. Inhibited by citral, disulfiram, and cyanamide. Activated by diethylstilbestrol. Inhibited by duocarmycin analogs. Cytosolic dehydrogenase that catalyzes the irreversible oxidation of a wide range of aldehydes to their corresponding carboxylic acid. Functions downstream of retinol dehydrogenases and catalyzes the oxidation of retinaldehyde into retinoic acid, the second step in the oxidation of retinol/vitamin A into retinoic acid. This pathway is crucial to control the levels of retinol and retinoic acid, two important molecules which excess can be teratogenic and cytotoxic. Also oxidizes aldehydes resulting from lipid peroxidation like (E)-4-hydroxynon-2-enal/HNE, malonaldehyde and hexanal that form protein adducts and are highly cytotoxic. By participating for instance to the clearance of (E)-4-hydroxynon-2-enal/HNE in the lens epithelium prevents the formation of HNE-protein adducts and lens opacification. Also functions downstream of fructosamine-3-kinase in the fructosamine degradation pathway by catalyzing the oxidation of 3-deoxyglucosone, the carbohydrate product of fructosamine 3-phosphate decomposition, which is itself a potent glycating agent that may react with lysine and arginine side-chains of proteins. Also has an aminobutyraldehyde dehydrogenase activity and is probably part of an alternative pathway for the biosynthesis of GABA/4-aminobutanoate in midbrain, thereby playing a role in GABAergic synaptic transmission. In Homo sapiens (Human), this protein is Aldehyde dehydrogenase 1A1.